Consider the following 311-residue polypeptide: Pyrimidine-specific ribonucleoside hydrolase RihA (311 aa).

Residue histidine 240 is part of the active site.

It belongs to the IUNH family. RihA subfamily.

Hydrolyzes with equal efficiency cytidine or uridine to ribose and cytosine or uracil, respectively. The sequence is that of Pyrimidine-specific ribonucleoside hydrolase RihA from Escherichia coli O17:K52:H18 (strain UMN026 / ExPEC).